Here is a 188-residue protein sequence, read N- to C-terminus: Adenine phosphoribosyltransferase (188 aa).

Belongs to the purine/pyrimidine phosphoribosyltransferase family. Homodimer.

It is found in the cytoplasm. It carries out the reaction AMP + diphosphate = 5-phospho-alpha-D-ribose 1-diphosphate + adenine. The protein operates within purine metabolism; AMP biosynthesis via salvage pathway; AMP from adenine: step 1/1. Its function is as follows. Catalyzes a salvage reaction resulting in the formation of AMP, that is energically less costly than de novo synthesis. The chain is Adenine phosphoribosyltransferase from Neisseria meningitidis serogroup A / serotype 4A (strain DSM 15465 / Z2491).